Consider the following 411-residue polypeptide: Prophage integrase IntR (411 aa).

A Core-binding (CB) domain is found at 81–176 (KTFGELCDIW…LLCSLLRFAY (96 aa)). Residues 197-404 (IKPDPLSKTE…IDDMNDEQIA (208 aa)) form the Tyr recombinase domain. Catalysis depends on residues Arg231, Lys266, Arg358, and His381. Tyr391 acts as the O-(3'-phospho-DNA)-tyrosine intermediate in catalysis.

The protein belongs to the 'phage' integrase family.

Functionally, integrase is necessary for integration of the phage into the host genome by site-specific recombination. In conjunction with excisionase, integrase is also necessary for excision of the prophage from the host genome. The polypeptide is Prophage integrase IntR (intR) (Escherichia coli (strain K12)).